Here is a 124-residue protein sequence, read N- to C-terminus: Small ribosomal subunit protein uS12 (124 aa).

Residue Asp-89 is modified to 3-methylthioaspartic acid.

The protein belongs to the universal ribosomal protein uS12 family. As to quaternary structure, part of the 30S ribosomal subunit. Contacts proteins S8 and S17. May interact with IF1 in the 30S initiation complex.

In terms of biological role, with S4 and S5 plays an important role in translational accuracy. Functionally, interacts with and stabilizes bases of the 16S rRNA that are involved in tRNA selection in the A site and with the mRNA backbone. Located at the interface of the 30S and 50S subunits, it traverses the body of the 30S subunit contacting proteins on the other side and probably holding the rRNA structure together. The combined cluster of proteins S8, S12 and S17 appears to hold together the shoulder and platform of the 30S subunit. The sequence is that of Small ribosomal subunit protein uS12 from Vibrio vulnificus (strain CMCP6).